The following is a 241-amino-acid chain: Nicotinamide riboside kinase (241 aa).

Residue 21–29 participates in ATP binding; the sequence is GCSSSGKST. Residues serine 28 and aspartate 47 each coordinate Mg(2+). The active-site Proton acceptor is aspartate 47. Substrate-binding positions include 47–50, 67–68, and aspartate 68; these read DDFY and WD. Arginine 163 lines the ATP pocket. Position 164 (arginine 164) interacts with substrate. ATP contacts are provided by residues arginine 167, 167–169, and 213–215; these read RGG and DVQ. 169–170 is a substrate binding site; the sequence is GY.

It belongs to the uridine kinase family. NRK subfamily.

It carries out the reaction beta-nicotinamide D-riboside + ATP = beta-nicotinamide D-ribonucleotide + ADP + H(+). It catalyses the reaction beta-D-ribosylnicotinate + ATP = nicotinate beta-D-ribonucleotide + ADP + H(+). The protein operates within cofactor biosynthesis; NAD(+) biosynthesis. In terms of biological role, catalyzes the phosphorylation of nicotinamide riboside (NR) and nicotinic acid riboside (NaR) to form nicotinamide mononucleotide (NMN) and nicotinic acid mononucleotide (NaMN). The protein is Nicotinamide riboside kinase (NRK1) of Eremothecium gossypii (strain ATCC 10895 / CBS 109.51 / FGSC 9923 / NRRL Y-1056) (Yeast).